A 725-amino-acid polypeptide reads, in one-letter code: Consortin (725 aa).

Disordered stretches follow at residues 1–72, 103–124, 296–353, 375–397, and 485–510; these read MDDS…LNNN, GKDK…AKKI, LLVS…SLSV, TQSS…CEDD, and QQPD…ENVL. The Cytoplasmic portion of the chain corresponds to 1-664; sequence MDDSDTPTYY…LDQDEVGGGS (664 aa). The span at 63–72 shows a compositional bias: polar residues; that stretch reads VSEQDSLNNN. The span at 109–121 shows a compositional bias: basic residues; it reads PGKRSPRSKKGTA. A compositionally biased stretch (basic and acidic residues) spans 300-314; that stretch reads EDPKEGGATTKESES. Polar residues-rich tracts occupy residues 343 to 353 and 375 to 388; these read DVQTDSPSLSV and TQSS…SGPD. The helical transmembrane segment at 665–685 threads the bilayer; that stretch reads CILLVLLCIATVFLSVGGTAL. Over 686–725 the chain is Extracellular; the sequence is YCTFGDMESPVCTDFADNMDFYYTKLLQGVAELKHWIYLS.

This sequence belongs to the CNST family. Interacts with connexins GJA1/CX43, GJB1/CX32, GJB2/CX26, GJB3/CX31, GJB6/CX30 and GJC1/CX45. Also interacts with GGA1 and GGA2. Does not interact with PANX1.

Its subcellular location is the cell membrane. It is found in the golgi apparatus. It localises to the trans-Golgi network membrane. The protein localises to the cytoplasmic vesicle. The protein resides in the secretory vesicle. Functionally, required for targeting of connexins to the plasma membrane. In Homo sapiens (Human), this protein is Consortin (CNST).